Consider the following 61-residue polypeptide: Small ribosomal subunit protein uS14 (61 aa).

4 residues coordinate Zn(2+): cysteine 24, cysteine 27, cysteine 40, and cysteine 43.

It belongs to the universal ribosomal protein uS14 family. Zinc-binding uS14 subfamily. In terms of assembly, part of the 30S ribosomal subunit. Contacts proteins S3 and S10. The cofactor is Zn(2+).

Functionally, binds 16S rRNA, required for the assembly of 30S particles and may also be responsible for determining the conformation of the 16S rRNA at the A site. In Rubrobacter xylanophilus (strain DSM 9941 / JCM 11954 / NBRC 16129 / PRD-1), this protein is Small ribosomal subunit protein uS14.